The sequence spans 420 residues: Tyrosine--tRNA ligase (420 aa).

Tyrosine 33 contacts L-tyrosine. The 'HIGH' region motif lies at 38 to 47 (PTADSLHVGH). L-tyrosine contacts are provided by tyrosine 167 and glutamine 171. Positions 227 to 231 (KFGKT) match the 'KMSKS' region motif. Lysine 230 contributes to the ATP binding site. The 67-residue stretch at 353–419 (LTVADLLVKV…GKRNYALVKV (67 aa)) folds into the S4 RNA-binding domain.

This sequence belongs to the class-I aminoacyl-tRNA synthetase family. TyrS type 1 subfamily. In terms of assembly, homodimer.

The protein resides in the cytoplasm. The enzyme catalyses tRNA(Tyr) + L-tyrosine + ATP = L-tyrosyl-tRNA(Tyr) + AMP + diphosphate + H(+). Its function is as follows. Catalyzes the attachment of tyrosine to tRNA(Tyr) in a two-step reaction: tyrosine is first activated by ATP to form Tyr-AMP and then transferred to the acceptor end of tRNA(Tyr). In Anaeromyxobacter dehalogenans (strain 2CP-1 / ATCC BAA-258), this protein is Tyrosine--tRNA ligase.